A 424-amino-acid polypeptide reads, in one-letter code: Isovaleryl-CoA dehydrogenase, mitochondrial (424 aa).

A mitochondrion-targeting transit peptide spans 1 to 30; the sequence is MATAVRLLGRRVSSWRLRPLPSPLAVPQRA. N6-acetyllysine; alternate is present on residues Lys56, Lys65, and Lys76. 3 positions are modified to N6-succinyllysine; alternate: Lys56, Lys65, and Lys76. FAD is bound by residues 163–172 and 196–198; these read LAMSEPNAGS and WIT. A substrate-binding site is contributed by Ser172. 220–221 is a substrate binding site; that stretch reads SR. Lys239 is modified (N6-acetyllysine). Residue Lys260 is modified to N6-acetyllysine; alternate. Lys260 carries the N6-succinyllysine; alternate modification. Substrate contacts are provided by residues Tyr275 and 282-285; that span reads DLER. The Proton acceptor role is filled by Glu284. Residue Arg310 coordinates FAD. At Lys316 the chain carries N6-succinyllysine. Residues Gln321 and 378–382 contribute to the FAD site; that span reads QCLGG. Substrate is bound at residue 405 to 406; sequence GG. 407-409 provides a ligand contact to FAD; sequence TSE.

The protein belongs to the acyl-CoA dehydrogenase family. Homotetramer. FAD is required as a cofactor.

Its subcellular location is the mitochondrion matrix. It carries out the reaction 3-methylbutanoyl-CoA + oxidized [electron-transfer flavoprotein] + H(+) = 3-methylbut-2-enoyl-CoA + reduced [electron-transfer flavoprotein]. It catalyses the reaction pentanoyl-CoA + oxidized [electron-transfer flavoprotein] + H(+) = (2E)-pentenoyl-CoA + reduced [electron-transfer flavoprotein]. The catalysed reaction is hexanoyl-CoA + oxidized [electron-transfer flavoprotein] + H(+) = (2E)-hexenoyl-CoA + reduced [electron-transfer flavoprotein]. The enzyme catalyses butanoyl-CoA + oxidized [electron-transfer flavoprotein] + H(+) = (2E)-butenoyl-CoA + reduced [electron-transfer flavoprotein]. It functions in the pathway amino-acid degradation; L-leucine degradation; (S)-3-hydroxy-3-methylglutaryl-CoA from 3-isovaleryl-CoA: step 1/3. Functionally, catalyzes the conversion of isovaleryl-CoA/3-methylbutanoyl-CoA to 3-methylbut-2-enoyl-CoA as an intermediate step in the leucine (Leu) catabolic pathway. To a lesser extent, is also able to catalyze the oxidation of other saturated short-chain acyl-CoA thioesters as pentanoyl-CoA, hexenoyl-CoA and butenoyl-CoA. The chain is Isovaleryl-CoA dehydrogenase, mitochondrial (Ivd) from Rattus norvegicus (Rat).